Reading from the N-terminus, the 310-residue chain is Ribosomal protein uL3 glutamine methyltransferase (310 aa).

Belongs to the protein N5-glutamine methyltransferase family. PrmB subfamily.

It carries out the reaction L-glutaminyl-[ribosomal protein uL3] + S-adenosyl-L-methionine = N(5)-methyl-L-glutaminyl-[ribosomal protein uL3] + S-adenosyl-L-homocysteine + H(+). Functionally, methylates large ribosomal subunit protein uL3 on a specific glutamine residue. The protein is Ribosomal protein uL3 glutamine methyltransferase of Vibrio anguillarum (strain ATCC 68554 / 775) (Listonella anguillarum).